A 310-amino-acid chain; its full sequence is Methionyl-tRNA formyltransferase (310 aa).

(6S)-5,6,7,8-tetrahydrofolate is bound at residue 109–112 (SLLP).

It belongs to the Fmt family.

It catalyses the reaction L-methionyl-tRNA(fMet) + (6R)-10-formyltetrahydrofolate = N-formyl-L-methionyl-tRNA(fMet) + (6S)-5,6,7,8-tetrahydrofolate + H(+). Its function is as follows. Attaches a formyl group to the free amino group of methionyl-tRNA(fMet). The formyl group appears to play a dual role in the initiator identity of N-formylmethionyl-tRNA by promoting its recognition by IF2 and preventing the misappropriation of this tRNA by the elongation apparatus. In Parvibaculum lavamentivorans (strain DS-1 / DSM 13023 / NCIMB 13966), this protein is Methionyl-tRNA formyltransferase.